The sequence spans 528 residues: Peptide chain release factor 3 (528 aa).

Residues 11–279 enclose the tr-type G domain; it reads SRRRTFAIIS…GLVDWAPSPQ (269 aa). GTP-binding positions include 20–27, 88–92, and 142–145; these read SHPDAGKT, DTPGH, and NKLD.

Belongs to the TRAFAC class translation factor GTPase superfamily. Classic translation factor GTPase family. PrfC subfamily.

Its subcellular location is the cytoplasm. Increases the formation of ribosomal termination complexes and stimulates activities of RF-1 and RF-2. It binds guanine nucleotides and has strong preference for UGA stop codons. It may interact directly with the ribosome. The stimulation of RF-1 and RF-2 is significantly reduced by GTP and GDP, but not by GMP. This is Peptide chain release factor 3 from Pseudoalteromonas atlantica (strain T6c / ATCC BAA-1087).